A 593-amino-acid chain; its full sequence is Translation initiation factor IF-2 (593 aa).

A tr-type G domain is found at 101–270 (LRPPVVTIMG…LLIAELEDLR (170 aa)). Residues 110–117 (GHVDHGKT) are G1. 110–117 (GHVDHGKT) contributes to the GTP binding site. The segment at 135-139 (GITQH) is G2. Residues 156–159 (DTPG) form a G3 region. GTP contacts are provided by residues 156–160 (DTPGH) and 210–213 (NKMD). The segment at 210–213 (NKMD) is G4. Residues 246-248 (SAR) are G5.

It belongs to the TRAFAC class translation factor GTPase superfamily. Classic translation factor GTPase family. IF-2 subfamily.

The protein resides in the cytoplasm. In terms of biological role, one of the essential components for the initiation of protein synthesis. Protects formylmethionyl-tRNA from spontaneous hydrolysis and promotes its binding to the 30S ribosomal subunits. Also involved in the hydrolysis of GTP during the formation of the 70S ribosomal complex. The polypeptide is Translation initiation factor IF-2 (Dehalococcoides mccartyi (strain CBDB1)).